The sequence spans 489 residues: UDP-N-acetylmuramoyl-L-alanyl-D-glutamate--2,6-diaminopimelate ligase (489 aa).

Ser-32 contacts UDP-N-acetyl-alpha-D-muramoyl-L-alanyl-D-glutamate. ATP is bound at residue 113 to 119 (GTNGKTT). UDP-N-acetyl-alpha-D-muramoyl-L-alanyl-D-glutamate is bound by residues 154-155 (TT), Ser-181, Gln-187, and Arg-189. Position 221 is an N6-carboxylysine (Lys-221). Meso-2,6-diaminopimelate-binding positions include Arg-381, 405-408 (DNPR), Gly-456, and Glu-460. The short motif at 405-408 (DNPR) is the Meso-diaminopimelate recognition motif element.

The protein belongs to the MurCDEF family. MurE subfamily. Mg(2+) is required as a cofactor. Carboxylation is probably crucial for Mg(2+) binding and, consequently, for the gamma-phosphate positioning of ATP.

It localises to the cytoplasm. The catalysed reaction is UDP-N-acetyl-alpha-D-muramoyl-L-alanyl-D-glutamate + meso-2,6-diaminopimelate + ATP = UDP-N-acetyl-alpha-D-muramoyl-L-alanyl-gamma-D-glutamyl-meso-2,6-diaminopimelate + ADP + phosphate + H(+). Its pathway is cell wall biogenesis; peptidoglycan biosynthesis. Functionally, catalyzes the addition of meso-diaminopimelic acid to the nucleotide precursor UDP-N-acetylmuramoyl-L-alanyl-D-glutamate (UMAG) in the biosynthesis of bacterial cell-wall peptidoglycan. The protein is UDP-N-acetylmuramoyl-L-alanyl-D-glutamate--2,6-diaminopimelate ligase of Gloeobacter violaceus (strain ATCC 29082 / PCC 7421).